Reading from the N-terminus, the 178-residue chain is Protein GrpE (178 aa).

Residues 1-26 (MQDQDKYAEQAASMEEPASADAPAIV) form a disordered region.

It belongs to the GrpE family. As to quaternary structure, homodimer.

Its subcellular location is the cytoplasm. Participates actively in the response to hyperosmotic and heat shock by preventing the aggregation of stress-denatured proteins, in association with DnaK and GrpE. It is the nucleotide exchange factor for DnaK and may function as a thermosensor. Unfolded proteins bind initially to DnaJ; upon interaction with the DnaJ-bound protein, DnaK hydrolyzes its bound ATP, resulting in the formation of a stable complex. GrpE releases ADP from DnaK; ATP binding to DnaK triggers the release of the substrate protein, thus completing the reaction cycle. Several rounds of ATP-dependent interactions between DnaJ, DnaK and GrpE are required for fully efficient folding. This chain is Protein GrpE, found in Herminiimonas arsenicoxydans.